A 91-amino-acid chain; its full sequence is Acylphosphatase (91 aa).

An Acylphosphatase-like domain is found at 5–91; the sequence is RLHAIVEGEV…KGEFTSFDTY (87 aa). Residues Arg-20 and Asn-38 contribute to the active site.

Belongs to the acylphosphatase family.

The enzyme catalyses an acyl phosphate + H2O = a carboxylate + phosphate + H(+). The chain is Acylphosphatase (acyP) from Metallosphaera sedula (strain ATCC 51363 / DSM 5348 / JCM 9185 / NBRC 15509 / TH2).